A 216-amino-acid polypeptide reads, in one-letter code: GTP-binding nuclear protein Ran, testis-specific isoform (216 aa).

A2 carries the N-acetylalanine modification. Positions 7–171 (PQIQFKLVLV…FWLARKLIGD (165 aa)) constitute a Small GTPase Ran-type domain. 17–24 (GDGGTGKT) is a binding site for GTP. At T24 the chain carries Phosphothreonine. A switch-I region spans residues 37-45 (KEYVATLGV). Position 60 is an N6-acetyllysine (K60). Position 65–69 (65–69 (DTAGQ)) interacts with GTP. Positions 68–84 (GQEKFGGLRDGYYIQAQ) are switch-II. K71 carries the post-translational modification N6-acetyllysine; alternate. A Glycyl lysine isopeptide (Lys-Gly) (interchain with G-Cter in SUMO2); alternate cross-link involves residue K71. A Glycyl lysine isopeptide (Lys-Gly) (interchain with G-Cter in ubiquitin); alternate cross-link involves residue K71. K99 carries the post-translational modification N6-acetyllysine. Residue 122 to 125 (NKVD) participates in GTP binding. The residue at position 134 (K134) is an N6-acetyllysine. K152 participates in a covalent cross-link: Glycyl lysine isopeptide (Lys-Gly) (interchain with G-Cter in SUMO2). An N6-acetyllysine; alternate modification is found at K159. At K159 the chain carries N6-succinyllysine; alternate.

The protein belongs to the small GTPase superfamily. Ran family. Testis specific.

The protein localises to the nucleus. It catalyses the reaction GTP + H2O = GDP + phosphate + H(+). GTP-binding protein involved in nucleocytoplasmic transport. Required for the import of protein into the nucleus and also for RNA export. Involved in chromatin condensation and control of cell cycle. This Rattus norvegicus (Rat) protein is GTP-binding nuclear protein Ran, testis-specific isoform (Rasl2-9).